The following is a 459-amino-acid chain: Exodeoxyribonuclease 7 large subunit (459 aa).

Belongs to the XseA family. Heterooligomer composed of large and small subunits.

The protein resides in the cytoplasm. The enzyme catalyses Exonucleolytic cleavage in either 5'- to 3'- or 3'- to 5'-direction to yield nucleoside 5'-phosphates.. Functionally, bidirectionally degrades single-stranded DNA into large acid-insoluble oligonucleotides, which are then degraded further into small acid-soluble oligonucleotides. The polypeptide is Exodeoxyribonuclease 7 large subunit (Yersinia pseudotuberculosis serotype IB (strain PB1/+)).